Reading from the N-terminus, the 359-residue chain is DNA ligase (359 aa).

ATP-binding positions include 32–35 (EIKY), R39, 55–57 (RVS), and E93. Residue K34 is the N6-AMP-lysine intermediate of the active site. E217 serves as a coordination point for a divalent metal cation. Positions 232 and 238 each coordinate ATP.

This sequence belongs to the ATP-dependent DNA ligase family. A divalent metal cation is required as a cofactor.

It catalyses the reaction ATP + (deoxyribonucleotide)n-3'-hydroxyl + 5'-phospho-(deoxyribonucleotide)m = (deoxyribonucleotide)n+m + AMP + diphosphate.. In terms of biological role, DNA ligase that seals nicks in double-stranded DNA during DNA replication, DNA recombination and DNA repair in an ATP-dependent reaction. Binds specifically to DNA nicks containing a 3'-OH and a 5'-phosphate group. The polypeptide is DNA ligase (Escherichia phage T7 (Bacteriophage T7)).